Consider the following 401-residue polypeptide: Regulatory protein E2 (401 aa).

A transactivation domain region spans residues 1–202 (MENLSSRLDL…KRFTNVMSST (202 aa)). The disordered stretch occupies residues 199-308 (MSSTSSPRAA…TPQKGHSSRL (110 aa)). 2 stretches are compositionally biased toward polar residues: residues 218–233 (PTLS…TSID) and 241–253 (GETS…QQKT). Positions 254–267 (PVRRRPYGRRRSRS) are enriched in basic residues. The segment at 317–401 (DPPVVCVKGG…SVFLGQFNGS (85 aa)) is DNA-binding domain. Lys324 is covalently cross-linked (Glycyl lysine isopeptide (Lys-Gly) (interchain with G-Cter in SUMO)).

This sequence belongs to the papillomaviridae E2 protein family. As to quaternary structure, binds DNA as homodimer. Interacts with protein E1; this interaction greatly increases E1 DNA-binding activity. Interacts with protein L1; this interaction enhances E2-dependent replication and transcription activation. Interacts with protein L2; this interaction inhibits E2 transcriptional activity but not DNA replication function E2. Interacts with protein E7; this interaction inhibits E7 oncogenic activity. Interacts with host TAF1; this interaction modulates E2-dependent transcriptional regulation. Interacts with host BRD4; this interaction mediates E2 transcriptional activation function. Additionally, the interaction with host BRD4 on mitotic chromosomes mediates tethering of the viral genome. Interacts with host TOPBP1; this interaction is required for optimal viral DNA replication. Phosphorylated. In terms of processing, sumoylation plays a regulatory role in E2 transcriptional activity.

Its subcellular location is the host nucleus. Functionally, plays a role in the initiation of viral DNA replication. A dimer of E2 interacts with a dimer of E1 in order to improve specificity of E1 DNA binding activity. Once the complex recognizes and binds DNA at specific sites, the E2 dimer is removed from DNA. E2 also regulates viral transcription through binding to the E2RE response element (5'-ACCNNNNNNGGT-3') present in multiple copies in the regulatory regions of the viral genome. Activates or represses transcription depending on E2RE's position with regards to proximal promoter elements including the TATA-box. Repression occurs by sterically hindering the assembly of the transcription initiation complex. The sequence is that of Regulatory protein E2 from Homo sapiens (Human).